A 768-amino-acid polypeptide reads, in one-letter code: Calcium up-regulated protein G (768 aa).

The segment at 1 to 22 (MINIEDISKSSNQSEEKQLKST) is disordered. Ricin B-type lectin domains are found at residues 1–107 (MINI…WTID) and 100–248 (KTQI…WGIN).

The protein belongs to the cup family.

The protein resides in the cytoplasm. The protein localises to the membrane. Functionally, may play an important role in stabilizing and/or regulating the cell membrane during Ca(2+) stress or certain stages of development. The polypeptide is Calcium up-regulated protein G (cupG) (Dictyostelium discoideum (Social amoeba)).